The primary structure comprises 337 residues: Tryptophan--tRNA ligase (337 aa).

ATP-binding positions include glutamine 11 to threonine 13 and glycine 19 to asparagine 20. The 'HIGH' region signature appears at proline 12–asparagine 20. An L-tryptophan-binding site is contributed by aspartate 135. ATP is bound by residues glycine 147–aspartate 149, valine 191, and lysine 200–serine 204. Positions lysine 200–serine 204 match the 'KMSKS' region motif.

It belongs to the class-I aminoacyl-tRNA synthetase family. As to quaternary structure, homodimer.

The protein resides in the cytoplasm. It catalyses the reaction tRNA(Trp) + L-tryptophan + ATP = L-tryptophyl-tRNA(Trp) + AMP + diphosphate + H(+). Its function is as follows. Catalyzes the attachment of tryptophan to tRNA(Trp). The sequence is that of Tryptophan--tRNA ligase from Prochlorococcus marinus (strain MIT 9313).